Reading from the N-terminus, the 147-residue chain is NADH-ubiquinone oxidoreductase chain 3 (147 aa).

Helical transmembrane passes span 6 to 26 (LFILFVSIIALLFLLINLVFA), 60 to 80 (AICFVILDLEIFTMFPYVGSL), and 84 to 104 (TFYSLVVILGFMFVVSAGFVF).

Belongs to the complex I subunit 3 family.

Its subcellular location is the mitochondrion membrane. The catalysed reaction is a ubiquinone + NADH + 5 H(+)(in) = a ubiquinol + NAD(+) + 4 H(+)(out). Core subunit of the mitochondrial membrane respiratory chain NADH dehydrogenase (Complex I) that is believed to belong to the minimal assembly required for catalysis. Complex I functions in the transfer of electrons from NADH to the respiratory chain. The immediate electron acceptor for the enzyme is believed to be ubiquinone. This chain is NADH-ubiquinone oxidoreductase chain 3 (ndh-3), found in Neurospora crassa (strain ATCC 24698 / 74-OR23-1A / CBS 708.71 / DSM 1257 / FGSC 987).